A 443-amino-acid polypeptide reads, in one-letter code: Signal recognition particle 54 kDa protein (443 aa).

GTP-binding positions include 107-114 (GVQGSGKT), 189-193 (DTAGR), and 247-250 (TKLD).

It belongs to the GTP-binding SRP family. SRP54 subfamily. In terms of assembly, part of the signal recognition particle protein translocation system, which is composed of SRP and FtsY. Archaeal SRP consists of a 7S RNA molecule of 300 nucleotides and two protein subunits: SRP54 and SRP19.

The protein localises to the cytoplasm. It carries out the reaction GTP + H2O = GDP + phosphate + H(+). In terms of biological role, involved in targeting and insertion of nascent membrane proteins into the cytoplasmic membrane. Binds to the hydrophobic signal sequence of the ribosome-nascent chain (RNC) as it emerges from the ribosomes. The SRP-RNC complex is then targeted to the cytoplasmic membrane where it interacts with the SRP receptor FtsY. The protein is Signal recognition particle 54 kDa protein of Pyrococcus horikoshii (strain ATCC 700860 / DSM 12428 / JCM 9974 / NBRC 100139 / OT-3).